Reading from the N-terminus, the 322-residue chain is Phospho-N-acetylmuramoyl-pentapeptide-transferase (322 aa).

Transmembrane regions (helical) follow at residues 10-30, 51-71, 79-99, 107-127, 146-166, 178-198, 203-223, 227-247, 250-270, and 302-322; these read YTAL…IPML, NGTP…TGLT, MAVG…DDFI, LGLK…YVAF, FVIN…VAIV, LASG…SSIA, VAVL…FNSY, VFMG…FSVL, SVLI…SVLI, and VVFI…IAVF.

The protein belongs to the glycosyltransferase 4 family. MraY subfamily. Requires Mg(2+) as cofactor.

The protein localises to the cell membrane. The enzyme catalyses UDP-N-acetyl-alpha-D-muramoyl-L-alanyl-gamma-D-glutamyl-meso-2,6-diaminopimeloyl-D-alanyl-D-alanine + di-trans,octa-cis-undecaprenyl phosphate = di-trans,octa-cis-undecaprenyl diphospho-N-acetyl-alpha-D-muramoyl-L-alanyl-D-glutamyl-meso-2,6-diaminopimeloyl-D-alanyl-D-alanine + UMP. It participates in cell wall biogenesis; peptidoglycan biosynthesis. Functionally, catalyzes the initial step of the lipid cycle reactions in the biosynthesis of the cell wall peptidoglycan: transfers peptidoglycan precursor phospho-MurNAc-pentapeptide from UDP-MurNAc-pentapeptide onto the lipid carrier undecaprenyl phosphate, yielding undecaprenyl-pyrophosphoryl-MurNAc-pentapeptide, known as lipid I. The chain is Phospho-N-acetylmuramoyl-pentapeptide-transferase from Clostridioides difficile (strain 630) (Peptoclostridium difficile).